The following is a 359-amino-acid chain: Peptide chain release factor 1 (359 aa).

Residue glutamine 236 is modified to N5-methylglutamine.

This sequence belongs to the prokaryotic/mitochondrial release factor family. In terms of processing, methylated by PrmC. Methylation increases the termination efficiency of RF1.

It is found in the cytoplasm. Functionally, peptide chain release factor 1 directs the termination of translation in response to the peptide chain termination codons UAG and UAA. This is Peptide chain release factor 1 from Streptococcus pyogenes serotype M3 (strain ATCC BAA-595 / MGAS315).